The following is a 299-amino-acid chain: 4-hydroxy-tetrahydrodipicolinate synthase (299 aa).

Threonine 44 is a binding site for pyruvate. The active-site Proton donor/acceptor is the tyrosine 133. The Schiff-base intermediate with substrate role is filled by lysine 162. Isoleucine 204 contributes to the pyruvate binding site.

The protein belongs to the DapA family. Homotetramer; dimer of dimers.

Its subcellular location is the cytoplasm. The catalysed reaction is L-aspartate 4-semialdehyde + pyruvate = (2S,4S)-4-hydroxy-2,3,4,5-tetrahydrodipicolinate + H2O + H(+). Its pathway is amino-acid biosynthesis; L-lysine biosynthesis via DAP pathway; (S)-tetrahydrodipicolinate from L-aspartate: step 3/4. Functionally, catalyzes the condensation of (S)-aspartate-beta-semialdehyde [(S)-ASA] and pyruvate to 4-hydroxy-tetrahydrodipicolinate (HTPA). The sequence is that of 4-hydroxy-tetrahydrodipicolinate synthase from Thermus thermophilus (strain ATCC 27634 / DSM 579 / HB8).